The primary structure comprises 222 residues: uncharacterized protein (222 aa).

The disordered stretch occupies residues 142–222 (ARRGGCVHPP…LPDPPSAGHL (81 aa)). Residues 160–169 (QSRSISSRRA) are compositionally biased toward low complexity. Residues 182-196 (PRRRPHRHRTRPQTR) show a composition bias toward basic residues.

Belongs to the Rv1128c/1148c/1588c/1702c/1945/3466 family.

This is an uncharacterized protein from Mycobacterium tuberculosis (strain CDC 1551 / Oshkosh).